A 385-amino-acid chain; its full sequence is Tryptophan--tRNA ligase (385 aa).

The short motif at 82-90 (PSGPMHIGH) is the 'HIGH' region element. Residues 253 to 257 (KMSAS) carry the 'KMSKS' region motif.

The protein belongs to the class-I aminoacyl-tRNA synthetase family.

The protein localises to the cytoplasm. It catalyses the reaction tRNA(Trp) + L-tryptophan + ATP = L-tryptophyl-tRNA(Trp) + AMP + diphosphate + H(+). This Pyrococcus furiosus (strain ATCC 43587 / DSM 3638 / JCM 8422 / Vc1) protein is Tryptophan--tRNA ligase.